We begin with the raw amino-acid sequence, 511 residues long: Lariat debranching enzyme (511 aa).

A divalent metal cation-binding residues include Cys52, His54, Asp83, and Asn128. Residues 168–198 (SGIYSHGDVEFSHYERPAFAERDVKSAYHVR) form a lariat recognition loop region. 3 residues coordinate a divalent metal cation: His226, His278, and His280. The segment at 473-511 (EDDFIIDRGHGSEEPEAKKSRLEEEKKKKKKKIENLKTL) is disordered. A compositionally biased stretch (basic and acidic residues) spans 477 to 498 (IIDRGHGSEEPEAKKSRLEEEK).

This sequence belongs to the lariat debranching enzyme family. The cofactor is Fe(2+). Requires Zn(2+) as cofactor. Mn(2+) is required as a cofactor.

The protein localises to the nucleus. With respect to regulation, active in presence of diverse metals including Fe(2+), Zn(2+), Mn(2+). Binds two metal cations in two adjacent alpha and beta metal-binding pockets. Functionally, cleaves the 2'-5' phosphodiester linkage at the branch point of lariat intron pre-mRNAs after splicing and converts them into linear molecules that are subsequently degraded. It thereby facilitates ribonucleotide turnover. The sequence is that of Lariat debranching enzyme (dbr-1) from Caenorhabditis briggsae.